Here is a 305-residue protein sequence, read N- to C-terminus: Protein hrde-2 (305 aa).

2 disordered regions span residues 211–233 (AEMV…PVPA) and 267–305 (EMSN…EYCQ). Residues 215–227 (PSNTTGSSGSPMS) are compositionally biased toward polar residues. The segment covering 268–287 (MSNDEYSPDESENDENEYDY) has biased composition (acidic residues). The span at 289–305 (NAARYDDGYDEGHEYCQ) shows a compositional bias: basic and acidic residues.

Expressed throughout the male and female germline.

Its subcellular location is the nucleus. Functionally, plays a role in germline RNA interference (RNAi), and in particular is required for piwi-interacting RNA (piRNA) gene silencing. Facilitates the binding of the argonaut protein hrde-1 to small interfering RNAs (siRNAs) targets that are required for transgenerational epigenetic inheritance and germline immortality. The sequence is that of Protein hrde-2 from Caenorhabditis elegans.